The primary structure comprises 706 residues: Melanopsin (706 aa).

The Extracellular portion of the chain corresponds to 1 to 86 (MTEIPSFQPP…VWDIPPLAHY (86 aa)). N-linked (GlcNAc...) asparagine glycans are attached at residues N12, N64, and N69. A helical membrane pass occupies residues 87–107 (IVGTAVFCIGCCGMFGNAVVV). The Cytoplasmic portion of the chain corresponds to 108–121 (YSFIKSKGLRTPAN). The helical transmembrane segment at 122–142 (FFIINLALSDFLMNLTNMPIF) threads the bilayer. The Extracellular segment spans residues 143–159 (AVNSAFQRWLLSDFACE). A disulfide bridge links C158 with C236. The chain crosses the membrane as a helical span at residues 160–180 (LYGFAGGLFGCLSINTLMAIS). The Cytoplasmic segment spans residues 181-201 (MDRYLVITKPFLVMRIVTKQR). A helical membrane pass occupies residues 202 to 222 (VMFAILLLWIWSLVWALPPLF). Topologically, residues 223–248 (GWSAYVSEGFGTSCTFDYMTPKLSYH) are extracellular. The helical transmembrane segment at 249–269 (IFTYIIFFTMYFIPGGVMIYC) threads the bilayer. Residues 270 to 314 (YYNIFATVKSGDKQFGKAVKEMAHEDVKNKAQQERQRKNEIKTAK) are Cytoplasmic-facing. A helical membrane pass occupies residues 315-335 (IAFIVISLFMSAWTPYAVVSA). Residues 336-351 (LGTLGYQDLVTPYLQS) are Extracellular-facing. Residues 352–372 (IPAMFAKSSAVYSPIVYAITY) traverse the membrane as a helical segment. K358 carries the N6-(retinylidene)lysine modification. At 373 to 706 (PKFREAVKKH…LSEAHDETVL (334 aa)) the chain is on the cytoplasmic side. Disordered regions lie at residues 393–446 (SEEE…RQDT), 571–599 (RTES…SFNT), and 630–658 (QSSE…NETE). Composition is skewed to low complexity over residues 404-418 (QSSA…QTTA) and 426-442 (SVDS…SGVS). The segment covering 571–593 (RTESGYDRSQDSQRKKVVGDTHR) has biased composition (basic and acidic residues). Residues 645–658 (GITEVDTDSENETE) are compositionally biased toward acidic residues.

Belongs to the G-protein coupled receptor 1 family. Opsin subfamily. As to expression, expressed in Joseph cells and photoreceptor cells of the dorsal ocelli.

The protein resides in the cell membrane. Its function is as follows. Photoreceptor implicated in non-image-forming responses to light. Photoisomerizes covalently bound all-trans retinal back to 11-cis retinal. Most likely coupled to the G(q) signaling cascade. The chain is Melanopsin from Branchiostoma belcheri (Amphioxus).